The sequence spans 68 residues: Cytochrome c3 (68 aa).

The heme site is built by His17, His20, Cys26, Cys29, His30, His45, Cys49, Cys52, His53, Cys62, Cys65, and His66.

Post-translationally, binds 3 heme groups per subunit.

In terms of biological role, participates in sulfate respiration coupled with phosphorylation by transferring electrons from the enzyme dehydrogenase to ferredoxin. This Desulfuromonas acetoxidans (Chloropseudomonas ethylica) protein is Cytochrome c3 (cyd).